The primary structure comprises 465 residues: MNEAFDCVVIGAGPGGYVAAITAAQAGLKTALIEEREAGGTCLNRGCIPSKALLASAEIVAQIRHADQFGIHINGFSIDYPAMVQRKDTVVRSIRDGLNGLIRSNKITVFSGRGSLISSTEVKILGETPSVIKAQSIILATGSEPRAFPGVPFSQQSPRILCSTGVLNLKEIPQKMAIIGGGVIGCEFASLFHTLGSEVSVIEASQQILALNNPDISKTMFDKFTRHGIRFMLGASVSSIEDMGDRVRLTINGNIEEYDYVLVSIGRRLNTENIGLDKAGVICDERGVIPTDSTMRTNVPNIYAIGDITGKWQLAHVASHQGIVAARNIAGHKDEIDYSAVPSVIFTFPEVASVGLSPTSAQQQGIPVKVTKFPFRAIGKAVAMGESDGFAAIISHETSQQILGAYVIGPHASSLISEITLAIRNELTLPCIYETIHAHPTLAEVWAESALLAVDTPLHMPPTRK.

Residues 34–42 (EEREAGGTC), lysine 51, and glycine 114 each bind FAD. The cysteines at positions 42 and 47 are disulfide-linked. Residues 180-184 (GGGVI), glutamate 203, valine 237, and 264-267 (SIGR) contribute to the NAD(+) site. Residues aspartate 307 and alanine 315 each contribute to the FAD site. Histidine 439 serves as the catalytic Proton acceptor.

This sequence belongs to the class-I pyridine nucleotide-disulfide oxidoreductase family. Requires FAD as cofactor.

It localises to the cytoplasm. The enzyme catalyses N(6)-[(R)-dihydrolipoyl]-L-lysyl-[protein] + NAD(+) = N(6)-[(R)-lipoyl]-L-lysyl-[protein] + NADH + H(+). The branched-chain alpha-keto dehydrogenase complex catalyzes the overall conversion of alpha-keto acids to acyl-CoA and CO(2). It contains multiple copies of 3 enzymatic components: branched-chain alpha-keto acid decarboxylase (E1), lipoamide acyltransferase (E2) and lipoamide dehydrogenase (E3). The sequence is that of Dihydrolipoyl dehydrogenase (lpdA) from Chlamydia muridarum (strain MoPn / Nigg).